We begin with the raw amino-acid sequence, 343 residues long: L-rhamnose-proton symporter (343 aa).

10 helical membrane passes run 4-24 (AIILGIIWHLVGAASAACFYA), 38-58 (WSIGGLVSWLILPWTVSYLLL), 68-88 (FSIATLLPVFLFGAMWGIGNI), 101-121 (MGIGIAIGITLIIGTLMTPIL), 137-157 (TLLGVFVALIGVAIVSYAGLL), 175-195 (LILAVMCGIFSAGMSFAMDAA), 207-227 (INSLYVALPSYVIIMGGGAII), 254-274 (LLITNILFSALAGLMWYLQFF), 289-309 (MSWMLHMSFYVLCGGIVGLLL), and 320-340 (VAVLCIGCLVIILAANIVGLG).

The protein belongs to the L-rhamnose transporter (TC 2.A.7.6) family.

It localises to the cell inner membrane. The enzyme catalyses L-rhamnopyranose(in) + H(+)(in) = L-rhamnopyranose(out) + H(+)(out). Functionally, uptake of L-rhamnose across the cytoplasmic membrane with the concomitant transport of protons into the cell (symport system). This chain is L-rhamnose-proton symporter, found in Yersinia pestis bv. Antiqua (strain Antiqua).